The sequence spans 640 residues: MSVPMTVKVQNLGRFLSAMIMPNISVFIAWGIISGLFIKSGWCPNQTLEKVLSPISVYLFPILIANTGGYLINGKRGAIVGSIAVVGAIISTAIPMLLGAMIIGPIGGWITYYFDKISKYKVKSGFEMLVNNFSVGILGVLLLFISFLCIGPMIEKLSCFLGYVVNLMINNHLLPFIAILIEPAKIFFLNNVINHGVLFPLGIQEVVKFNKSIFFLIESNPGPGIGVLMAWFFFGCDNIKKSLKEAIVIQLFGGIHEIYFPYVLKNPRLILALILGSITGIFILIVLRGGLISAASPGSIISILAMTPKGLYVINLLAIIISFLVSFLVSCMLLKISNRNHYVKGSNTKIEKDNFLINSSFQKNRTCIKSSLDSHKCIRNIIFACDAGMGSSAVAAGILRNKIHDLNIFNITVSNAAIDSIPNFGVDLIITHYSLTDRARKRNSNAKHLSLNSFLDNAFYNELSKYLVENNLDNNSSILDFSVRNQNNFSSKKNVFSLTKENIFLGQIASSKEEVIRFIGRQLVNQGYVKEEYIEAMLEREKMMSTWLGESIALPHGTIQSKDFILNTGIIFCQFPNGILFGDDPEDIAHLVIGVAARNNEHIPVVSNITNILDNNDVIKSLSITKNIDDVLYLFSRKNI.

Residues 12-343 (LGRFLSAMIM…LKISNRNHYV (332 aa)) form the PTS EIIC type-2 domain. A run of 6 helical transmembrane segments spans residues 24–45 (ISVFIAWGIISGLFIKSGWCPN), 50–70 (KVLSPISVYLFPILIANTGGY), 134–155 (SVGILGVLLLFISFLCIGPMIE), 165–185 (VNLMINNHLLPFIAILIEPAK), 273–292 (LILGSITGIFILIVLRGGLI), and 313–334 (VINLLAIIISFLVSFLVSCMLL). The PTS EIIB type-2 domain maps to 379–475 (RNIIFACDAG…YLVENNLDNN (97 aa)). The Phosphocysteine intermediate; for EIIB activity role is filled by C385. C385 carries the phosphocysteine; by EIIA modification. A PTS EIIA type-2 domain is found at 496–638 (FSLTKENIFL…DDVLYLFSRK (143 aa)). H556 serves as the catalytic Tele-phosphohistidine intermediate; for EIIA activity. H556 carries the post-translational modification Phosphohistidine; by HPr.

As to quaternary structure, homodimer. Post-translationally, an intramolecular phosphotransfer takes places between His-556 and Cys-385.

The protein resides in the cell inner membrane. The catalysed reaction is D-mannitol(out) + N(pros)-phospho-L-histidyl-[protein] = D-mannitol 1-phosphate(in) + L-histidyl-[protein]. The phosphoenolpyruvate-dependent sugar phosphotransferase system (sugar PTS), a major carbohydrate active transport system, catalyzes the phosphorylation of incoming sugar substrates concomitantly with their translocation across the cell membrane. This system is involved in D-mannitol transport. The sequence is that of PTS system mannitol-specific EIICBA component (mtlA) from Buchnera aphidicola subsp. Baizongia pistaciae (strain Bp).